Consider the following 941-residue polypeptide: Zinc finger protein su(Hw) (941 aa).

Disordered regions lie at residues 1-97 (MSAS…APAA) and 176-211 (ENNN…NSSQ). The span at 47 to 57 (STTTTTSRTPS) shows a compositional bias: low complexity. Residues 185–202 (VTEDDEDLGEDGDEDGED) show a composition bias toward acidic residues. Phosphothreonine is present on T186. The segment at 220–242 (HVCGKCYKTFRRVQSLKKHLEFC) adopts a C2H2-type 1; atypical zinc-finger fold. The segment at 290–313 (INCPDCPKSFKTQTSYERHIFITH) adopts a C2H2-type 2 zinc-finger fold. A C2H2-type 3; atypical zinc finger spans residues 319–341 (FPCSICNANLRSEALLALHEEQH). 9 consecutive C2H2-type zinc fingers follow at residues 348 to 366 (YACK…LKRH), 380 to 402 (MSCK…LKQH), 413 to 435 (YMCH…IRTH), 441 to 463 (FDCD…RRYH), 469 to 491 (YSCT…MKRH), 497 to 519 (HKCD…SKTH), 523 to 545 (FPCE…VKTH), 553 to 577 (FSCA…EGKH), and 596 to 619 (TDCA…RTVH). The interaction with mod(mdg4) stretch occupies residues 760–860 (ILTEEDIKLK…PIDDVIEYVL (101 aa)). The tract at residues 864–941 (DQDEGGLDKD…KKPVGEQEKA (78 aa)) is disordered. Composition is skewed to basic and acidic residues over residues 869–880 (GLDKDNESHSGD) and 891–941 (KTNE…QEKA).

As to quaternary structure, component of the gypsy chromatin insulator complex, composed of Cp190, mod(mdg4) and su(Hw). The gypsy chromatin insulator complex interacts with Topors via mod(mdg4) and su(Hw). Upon ecdysone stimulation, interacts with Nup98.

It localises to the nucleus. The protein resides in the chromosome. Functionally, component of the gypsy chromatin insulator complex which is required for the function of the gypsy chromatin insulator and other endogenous chromatin insulators. Chromatin insulators are regulatory elements which establish independent domains of transcriptional activity within eukaryotic genomes. Insulators have two defining properties; they can block the communication between an enhancer and a promoter when placed between them and can also buffer transgenes from position effect variegation (PEV). Insulators are proposed to structure the chromatin fiber into independent domains of differing transcriptional potential by promoting the formation of distinct chromatin loops. This chromatin looping may involve the formation of insulator bodies, where homotypic interactions between individual subunits of the insulator complex could promote the clustering of widely spaced insulators at the nuclear periphery. Within the gypsy insulator complex, this protein binds specifically to a region of the gypsy element located 3' of the 5' long terminal repeat (LTR), and may also mediate interaction with other endogenous insulators at sites distinct from those recognized by Cp190. Cooperates with pita and cliff to recruit Cp190 and regulate insulator function at the front-ultraabdominal (Fub) boundary. This chain is Zinc finger protein su(Hw), found in Drosophila melanogaster (Fruit fly).